Reading from the N-terminus, the 852-residue chain is Chitin synthase 1 (852 aa).

Disordered stretches follow at residues Glu27 to Ala46 and Ser53 to Gly97. The span at Ser53 to Ala74 shows a compositional bias: polar residues. Transmembrane regions (helical) follow at residues Arg492–Arg509, Val532–Ile552, Ile572–Met592, Phe601–Ser621, Phe686–Cys706, Thr787–Ser807, and Cys830–Thr850.

The protein belongs to the chitin synthase family. Class II subfamily.

The protein resides in the cell membrane. It carries out the reaction [(1-&gt;4)-N-acetyl-beta-D-glucosaminyl](n) + UDP-N-acetyl-alpha-D-glucosamine = [(1-&gt;4)-N-acetyl-beta-D-glucosaminyl](n+1) + UDP + H(+). Its function is as follows. Polymerizes chitin, a structural polymer of the cell wall and septum, by transferring the sugar moiety of UDP-GlcNAc to the non-reducing end of the growing chitin polymer. This chain is Chitin synthase 1 (CHS1), found in Mucor circinelloides f. lusitanicus (Mucor racemosus var. lusitanicus).